The primary structure comprises 478 residues: RNA-binding protein 42 (478 aa).

Residues 1–20 show a composition bias toward low complexity; sequence MASAMAGAGPAPGLPVAGGP. A disordered region spans residues 1 to 33; it reads MASAMAGAGPAPGLPVAGGPVVPGPGVGIPGKS. Position 2 is an N-acetylalanine (Ala-2). The residue at position 133 (Ser-133) is a Phosphoserine. Arg-151, Arg-156, Arg-166, and Arg-179 each carry asymmetric dimethylarginine. 2 disordered regions span residues 171-207 and 317-354; these read LSSAAGGPRPMALRPPHQALVGPPLPGPPGPPMMLPP and SLRPRPRPPRPEPPPGLMALEVPEPLGEDKKKGKPEKL. The segment covering 193–205 has biased composition (pro residues); that stretch reads PPLPGPPGPPMML. A necessary for interaction with HNRNPK region spans residues 234-478; sequence ELGLGLGLGL…QKEKKKLGLR (245 aa). Residues 343–354 show a composition bias toward basic and acidic residues; sequence GEDKKKGKPEKL. An RRM domain is found at 379-457; the sequence is FRIFCGDLGN…RPIKLRKSMW (79 aa).

This sequence belongs to the RRM RBM42 family. Interacts with HNRNPK. As to expression, expressed in cell lines (at protein level). Expressed in heart, brain, spleen, lung, liver, skeletal muscle, kidney and testis.

The protein localises to the nucleus. The protein resides in the cytoplasm. Functionally, binds (via the RRM domain) to the 3'-untranslated region (UTR) of CDKN1A mRNA. This chain is RNA-binding protein 42 (Rbm42), found in Mus musculus (Mouse).